The chain runs to 187 residues: Elongation factor P (187 aa).

This sequence belongs to the elongation factor P family.

It localises to the cytoplasm. Its pathway is protein biosynthesis; polypeptide chain elongation. Functionally, involved in peptide bond synthesis. Stimulates efficient translation and peptide-bond synthesis on native or reconstituted 70S ribosomes in vitro. Probably functions indirectly by altering the affinity of the ribosome for aminoacyl-tRNA, thus increasing their reactivity as acceptors for peptidyl transferase. This is Elongation factor P from Corynebacterium jeikeium (strain K411).